A 132-amino-acid chain; its full sequence is Small ribosomal subunit protein eS6 (132 aa).

Belongs to the eukaryotic ribosomal protein eS6 family.

The protein is Small ribosomal subunit protein eS6 of Methanoculleus marisnigri (strain ATCC 35101 / DSM 1498 / JR1).